The chain runs to 167 residues: NADH-quinone oxidoreductase subunit B 2 (167 aa).

[4Fe-4S] cluster is bound by residues C38, C39, C103, and C132.

The protein belongs to the complex I 20 kDa subunit family. As to quaternary structure, NDH-1 is composed of 14 different subunits. Subunits NuoB, C, D, E, F, and G constitute the peripheral sector of the complex. The cofactor is [4Fe-4S] cluster.

It localises to the cell inner membrane. The catalysed reaction is a quinone + NADH + 5 H(+)(in) = a quinol + NAD(+) + 4 H(+)(out). NDH-1 shuttles electrons from NADH, via FMN and iron-sulfur (Fe-S) centers, to quinones in the respiratory chain. The immediate electron acceptor for the enzyme in this species is believed to be ubiquinone. Couples the redox reaction to proton translocation (for every two electrons transferred, four hydrogen ions are translocated across the cytoplasmic membrane), and thus conserves the redox energy in a proton gradient. The protein is NADH-quinone oxidoreductase subunit B 2 of Rhizobium meliloti (strain 1021) (Ensifer meliloti).